The sequence spans 534 residues: Ulvan lyase NLR42 (534 aa).

The first 47 residues, 1–47 (MVFFKDLFIFKSLIKGSLYSGHMKKKLLNYLPLFALMLFTVSMMAQT), serve as a signal peptide directing secretion. Residues C59 and C89 are joined by a disulfide bond. Positions 63, 68, 86, 88, 91, and 92 each coordinate Ca(2+). A substrate-binding site is contributed by Y164. Residue K169 is the Proton acceptor of the active site. Residues 218-223 (SGAAGR) and 288-291 (YRVK) each bind substrate. The active-site Proton donor/acceptor is the Y288. The tract at residues 316–449 (PAADIYRIKN…SKWNLESTTL (134 aa)) is ulvan-binding domain. Positions 450–534 (SVDSQQIASV…KVYQTKLIVN (85 aa)) are cleaved as a propeptide — removed by the type IX secretion system (T9SS).

It belongs to the polysaccharide lyase 28 family. Ca(2+) serves as cofactor.

The protein resides in the secreted. Its function is as follows. Ulvan lyase involved in ulvan degradation. Ulvan is the main polysaccharide component of the Ulvales (green seaweed) cell wall. It is composed of disaccharide building blocks comprising 3-sulfated rhamnose (Rha3S) linked to D-glucuronic acid (GlcA), L-iduronic acid (IduA), or D-xylose (Xyl). Ulvan lyase catalyzes the endolytic cleavage of the glycosidic bond between Rha3S and the uronic acids GlcA or IduA, producing oligosaccharides that have unsaturated 4-deoxy-L-threo-hex-4-enopyranosiduronic acid (deltaUA) at the non-reducing end. This results eventually in the degradation of the ulvan polysaccharide into deltaUA-Rha3S disaccharides and deltaUA-Rha3S-Xyl-Rha3S tetrasaccharides. In Nonlabens ulvanivorans (Persicivirga ulvanivorans), this protein is Ulvan lyase NLR42.